The primary structure comprises 230 residues: Ribose-5-phosphate isomerase A (230 aa).

Residues Thr-32–Thr-35, Asp-85–Asp-88, and Lys-98–Gly-101 each bind substrate. Glu-107 (proton acceptor) is an active-site residue. Residue Lys-125 coordinates substrate.

It belongs to the ribose 5-phosphate isomerase family. Homodimer.

It catalyses the reaction aldehydo-D-ribose 5-phosphate = D-ribulose 5-phosphate. The protein operates within carbohydrate degradation; pentose phosphate pathway; D-ribose 5-phosphate from D-ribulose 5-phosphate (non-oxidative stage): step 1/1. Its function is as follows. Catalyzes the reversible conversion of ribose-5-phosphate to ribulose 5-phosphate. This Burkholderia ambifaria (strain ATCC BAA-244 / DSM 16087 / CCUG 44356 / LMG 19182 / AMMD) (Burkholderia cepacia (strain AMMD)) protein is Ribose-5-phosphate isomerase A.